The sequence spans 80 residues: Pigment-dispersing hormone type 2 (80 aa).

A signal peptide spans 1–23; it reads MARCFVVLAFLALAAMSLQVATA. A77 carries the post-translational modification Alanine amide.

It belongs to the arthropod PDH family. In terms of tissue distribution, eyestalk.

The protein localises to the secreted. The pigment-dispersing hormone causes the migration of the distal retinal pigment into the proximal end of the pigment chromatophore cells and thus decreases the amount of light entering the retinulas. May also function as a neurotransmitter and/or neuromodulator. In Penaeus vannamei (Whiteleg shrimp), this protein is Pigment-dispersing hormone type 2 (PDH2).